Here is a 419-residue protein sequence, read N- to C-terminus: LWamide neuropeptides (419 aa).

A signal peptide spans 1–27 (MEKEMRNLMLLVLLTVILDNGIGKCNA). Positions 27-48 (AKSEEDQDGNARNNRIDKNDDN) are disordered. Residues 28–104 (KSEEDQDGNA…ENLDIDSTVQ (77 aa)) constitute a propeptide that is removed on maturation. Tryptophan amide is present on tryptophan 110. A propeptide spanning residues 113–140 (EADFDNTRAHDSAQISDEKQSGLWVGDA) is cleaved from the precursor. The segment covering 120–132 (RAHDSAQISDEKQ) has biased composition (basic and acidic residues). The disordered stretch occupies residues 120-332 (RAHDSAQISD…PGLWGRQVED (213 aa)). Tryptophan amide is present on tryptophan 146. Residues 149–150 (DA) constitute a propeptide that is removed on maturation. Position 156 is a tryptophan amide (tryptophan 156). A propeptide spanning residues 159 to 160 (DA) is cleaved from the precursor. Tryptophan amide is present on tryptophan 166. Positions 169–170 (DA) are excised as a propeptide. Tryptophan 176 is subject to Tryptophan amide. Positions 179–180 (DA) are excised as a propeptide. Tryptophan 186 is modified (tryptophan amide). A propeptide spanning residues 189 to 190 (DA) is cleaved from the precursor. Tryptophan 196 carries the post-translational modification Tryptophan amide. Residues 199–200 (DA) constitute a propeptide that is removed on maturation. At tryptophan 206 the chain carries Tryptophan amide. The propeptide occupies 209 to 210 (DA). Tryptophan amide is present on tryptophan 216. The propeptide at 218–220 (GDA) is seems to have a sequencing error or a mutation in position 218; Gly instead of Arg. Tryptophan amide is present on tryptophan 226. A propeptide spanning residues 229 to 230 (DA) is cleaved from the precursor. A Tryptophan amide modification is found at tryptophan 236. A propeptide spanning residues 239-240 (DA) is cleaved from the precursor. Tryptophan 246 carries the tryptophan amide modification. A propeptide spanning residues 249–250 (DA) is cleaved from the precursor. Tryptophan 256 bears the Tryptophan amide mark. The propeptide occupies 259–260 (DA). At tryptophan 266 the chain carries Tryptophan amide. A propeptide spanning residues 269–270 (DA) is cleaved from the precursor. Tryptophan 276 carries the tryptophan amide modification. Residues 279–280 (DT) constitute a propeptide that is removed on maturation. Residue tryptophan 286 is modified to Tryptophan amide. Residues 289-290 (DA) constitute a propeptide that is removed on maturation. Tryptophan 296 carries the tryptophan amide modification. 2 consecutive propeptides follow at residues 299–300 (DA) and 309–320 (DNNVIKSRSDDA). Tryptophan 326 is modified (tryptophan amide). The propeptide occupies 329 to 419 (QVEDGPTKIW…RRNNKKNNKF (91 aa)).

It belongs to the LWamide neuropeptide family. As to expression, in planula larvae, expressed in a narrow ring of ectodermal neurosensory cells around the widest circumference at the anterior of the larvae. In primary polyps, expression is confined to endodermal cells of the hypostome. In mature polyps, expression is strong in the epidermis from the tentacle level to the base of the polyp and weak in the gastrodermal cells in the apical hypostome.

The protein localises to the secreted. Its function is as follows. LWamide peptides may be involved in induction of metamorphosis. In Hydractinia echinata (Snail fur), this protein is LWamide neuropeptides.